The following is a 298-amino-acid chain: Pantothenate synthetase (298 aa).

An ATP-binding site is contributed by 30-37; the sequence is MGNLHEGH. His-37 acts as the Proton donor in catalysis. Gln-61 contacts (R)-pantoate. Gln-61 contributes to the beta-alanine binding site. 149 to 152 is a binding site for ATP; that stretch reads GEKD. Gln-155 contributes to the (R)-pantoate binding site. ATP-binding positions include Val-178 and 186-189; that span reads MSSR.

It belongs to the pantothenate synthetase family. As to quaternary structure, homodimer.

The protein resides in the cytoplasm. It carries out the reaction (R)-pantoate + beta-alanine + ATP = (R)-pantothenate + AMP + diphosphate + H(+). It participates in cofactor biosynthesis; (R)-pantothenate biosynthesis; (R)-pantothenate from (R)-pantoate and beta-alanine: step 1/1. Functionally, catalyzes the condensation of pantoate with beta-alanine in an ATP-dependent reaction via a pantoyl-adenylate intermediate. The protein is Pantothenate synthetase of Aliivibrio salmonicida (strain LFI1238) (Vibrio salmonicida (strain LFI1238)).